The chain runs to 183 residues: Outer membrane protein H.8 (183 aa).

The signal sequence occupies residues 1-17 (MKAYLALISAAVIGLAA). A lipid anchor (N-palmitoyl cysteine) is attached at C18. Residue C18 is the site of S-diacylglycerol cysteine attachment. The disordered stretch occupies residues 27–51 (AEATPAAEAPASEAPAAEAAPADAA). The Plastocyanin-like domain occupies 57–183 (GNCAATVESN…LMNGKVTLVD (127 aa)). Cu cation is bound by residues H102, C166, H171, and M175.

Requires Cu cation as cofactor.

The protein resides in the cell outer membrane. The chain is Outer membrane protein H.8 from Neisseria meningitidis serogroup B (strain ATCC BAA-335 / MC58).